The sequence spans 396 residues: Jacalin-related lectin 45 (396 aa).

Jacalin-type lectin domains lie at 3–138 (KKVT…KTSH), 144–264 (QFRM…NFAV), and 270–392 (VKKL…YVKP).

This sequence belongs to the jacalin lectin family.

The sequence is that of Jacalin-related lectin 45 (JAL45) from Arabidopsis thaliana (Mouse-ear cress).